Reading from the N-terminus, the 1505-residue chain is MADRFSRFNEDRDFQGNHFDQYEEGHLEIEQASLDKPIESDNIGHRLLQKHGWKLGQGLGKSLQGRTDPIPIVVKYDVMGMGRMEMELDYAEDATERRRVLEVEKEDTEELRQKYKDYVDKEKAIAKALEDLRANFYCELCDKQYQKHQEFDNHINSYDHAHKQRLKDLKQREFARNVSSRSRKDEKKQEKALRRLHELAEQRKQAECAPGSGPMFRPTTVAVDEDGGEEDKDESSTNSGASAVSSCGFGADFSTDKGGSFTSVQITNTTGLSQAPGLASQGISFGIKNNLGPPLQKLGVSFSFAKKAPVKLESIASVFKDHAEEGSSEDGTKADEKSSDQGVQKVGDTDGTGNLDGKKEDEDPQDGGSLASTLSKLKRMKREEGTGATEPEYYHYIPPAHCKVKPNFPFLLFMRASEQMEGDHSAHSKSAPENRKSSSPKPQGCSKTAASPGAERTVSEASELQKEAAVAGPSEPGGKTETKKGSGGGEDEQSVESRETSESPMCESNPKDISQATPATKAGQGPKHPTGPFFPVLSKDESTALQWPSELLIFTKAEPSISYSCNPLYFDFKLSRNKDAKAKGTEKPKDVAGSSKDHLQSLDPREPNKSQEEEQDVVLSSEGRVDEPASGAACSSLNKQEPGGSHMSETEDTGRSHPSKKEPSGKSHRHKKKKKHKKSSKHKRKHKADTEEKSSKAESGEKSKKRKKRKRKKNKSSAAADSERGPKSEPPGSGSPAPPRRRRRAQDDSQRRSLPAEEGNSGKKDDGGGGSSCQDHSGRKHKGEPPTSSCQRRANTKHSSRSSHRSQPSSGDEDSDDASSHRLHQKSPSQYSEEEEEEEEEEEEEDEDSGSEHSRSRSRSGHRHSSHRSSRRSYSSSSDASSDQSCYSRQHSYSDDSYSDYSDRSRRHSKRSHDSDDSDYTSSKHRSKRHKYSSSDDDYSLSCSQSRSRSRSHTRERSRSRGRSRSSSCSRSRSKRRSRSTTAHSWQRSRSYSRDRSRSTRSPSQRSGSRKGSWGHESPEERRSGRRDFIRSKIYRSQSPHYFQSGRGEGPGKKEDGRGDDSKGAGLPSQNSNTGTGRGSESDCSPEDKNSVTARLLLEKIQSRKVERKPNVCEEVLATPNKAGLKYKNPPQGYFGPKLPPSLGNKPVLPMIGKLPATRKSNKKCEESGLERGEEQEHSEPEEGSPRSSDAPFGHQFSEEAAGPLSDPPPEEPKSEEATADHSVAPLGTPAHTDCYPGDPAISHNYLPDPSDGDTLESLDSGSQPGPVESSLLPIAPDLEHFPNYAPPSGEPSIESTDGTEDASLAPLESQPITFTPEEMEKYSKLQQAAQQHIQQQLLAKQVKAFPASTALAPATPALQPIHIQQPATASATSITTVQHAILQHHAAAAAAAIGIHPHPHPQPLAQVHHIPQPHLTPISLSHLTHSIIPGHPATFLASHPIHIIPASAIHPGPFTFHPVPHAALYPTLLAPRPAAAAATALHLHPLLHPIFSGQDLQHPPSHGT.

A G-patch domain is found at 40 to 86 (SDNIGHRLLQKHGWKLGQGLGKSLQGRTDPIPIVVKYDVMGMGRMEM). Positions 89–124 (DYAEDATERRRVLEVEKEDTEELRQKYKDYVDKEKA) form a coiled coil. A C2H2-type zinc finger spans residues 136-160 (FYCELCDKQYQKHQEFDNHINSYDH). 2 stretches are compositionally biased toward basic and acidic residues: residues 166-175 (LKDLKQREFA) and 182-206 (SRKD…RKQA). The disordered stretch occupies residues 166 to 244 (LKDLKQREFA…SSTNSGASAV (79 aa)). Over residues 223 to 233 (VDEDGGEEDKD) the composition is skewed to acidic residues. Lys-311 participates in a covalent cross-link: Glycyl lysine isopeptide (Lys-Gly) (interchain with G-Cter in SUMO2). 2 stretches are compositionally biased toward basic and acidic residues: residues 322–339 (HAEE…EKSS) and 421–436 (EGDH…ENRK). Disordered regions lie at residues 322–393 (HAEE…EPEY) and 419–537 (QMEG…FPVL). Over residues 437 to 449 (SSSPKPQGCSKTA) the composition is skewed to polar residues. The residue at position 479 (Lys-479) is an N6-acetyllysine. Lys-573 participates in a covalent cross-link: Glycyl lysine isopeptide (Lys-Gly) (interchain with G-Cter in SUMO2). Basic and acidic residues-rich tracts occupy residues 575 to 612 (SRNK…KSQE) and 648 to 665 (SETE…EPSG). The tract at residues 575–1304 (SRNKDAKAKG…ESTDGTEDAS (730 aa)) is disordered. Ser-648 carries the phosphoserine modification. Positions 666 to 687 (KSHRHKKKKKHKKSSKHKRKHK) are enriched in basic residues. Residues 688–702 (ADTEEKSSKAESGEK) show a composition bias toward basic and acidic residues. A compositionally biased stretch (basic residues) spans 703–715 (SKKRKKRKRKKNK). Residues Ser-733, Ser-735, and Ser-753 each carry the phosphoserine modification. A compositionally biased stretch (basic and acidic residues) spans 745–767 (AQDDSQRRSLPAEEGNSGKKDDG). Over residues 794–804 (ANTKHSSRSSH) the composition is skewed to basic residues. Over residues 832–849 (SEEEEEEEEEEEEEDEDS) the composition is skewed to acidic residues. Positions 856–871 (SRSRSGHRHSSHRSSR) are enriched in basic residues. Over residues 872–900 (RSYSSSSDASSDQSCYSRQHSYSDDSYSD) the composition is skewed to low complexity. Ser-915 and Ser-918 each carry phosphoserine. A compositionally biased stretch (basic residues) spans 923–932 (SKHRSKRHKY). A phosphoserine mark is found at Ser-985, Ser-1013, Ser-1018, Ser-1037, and Ser-1039. The span at 1017–1031 (ESPEERRSGRRDFIR) shows a compositional bias: basic and acidic residues. Positions 1050–1063 (GPGKKEDGRGDDSK) are enriched in basic and acidic residues. The residue at position 1085 (Ser-1085) is a Phosphoserine. Composition is skewed to basic and acidic residues over residues 1097-1112 (LLEK…KPNV), 1163-1185 (KKCE…EEGS), and 1211-1220 (EEPKSEEATA). Residue Lys-1109 forms a Glycyl lysine isopeptide (Lys-Gly) (interchain with G-Cter in SUMO2) linkage. Ser-1179 is modified (phosphoserine).

This is G patch domain-containing protein 8 (Gpatch8) from Mus musculus (Mouse).